Here is a 203-residue protein sequence, read N- to C-terminus: ATP-dependent Clp protease proteolytic subunit 1 (203 aa).

Serine 98 functions as the Nucleophile in the catalytic mechanism. Histidine 123 is a catalytic residue.

The protein belongs to the peptidase S14 family. Fourteen ClpP subunits assemble into 2 heptameric rings which stack back to back to give a disk-like structure with a central cavity, resembling the structure of eukaryotic proteasomes.

Its subcellular location is the cytoplasm. It catalyses the reaction Hydrolysis of proteins to small peptides in the presence of ATP and magnesium. alpha-casein is the usual test substrate. In the absence of ATP, only oligopeptides shorter than five residues are hydrolyzed (such as succinyl-Leu-Tyr-|-NHMec, and Leu-Tyr-Leu-|-Tyr-Trp, in which cleavage of the -Tyr-|-Leu- and -Tyr-|-Trp bonds also occurs).. Functionally, cleaves peptides in various proteins in a process that requires ATP hydrolysis. Has a chymotrypsin-like activity. Plays a major role in the degradation of misfolded proteins. This chain is ATP-dependent Clp protease proteolytic subunit 1, found in Chlamydia felis (strain Fe/C-56) (Chlamydophila felis).